The sequence spans 170 residues: Cathelicidin antimicrobial peptide (170 aa).

An N-terminal signal peptide occupies residues 1 to 30; sequence MKTQRDGPSLGRWSLLLLLLGLTMPLAVIG. The propeptide at 31–131 is cathelin-like domain (CLD); sequence RVLSYQEAVL…DISCDKDKRK (101 aa). Residues 31–131 are cathelin-like domain (CLD); that stretch reads RVLSYQEAVL…DISCDKDKRK (101 aa). Cystine bridges form between Cys86–Cys97 and Cys108–Cys125. Positions 150 to 162 are active core; it reads LKKIGQKIKDFFG.

This sequence belongs to the cathelicidin family. As to quaternary structure, monomer, homodimer or homotrimer (in vitro). Oligomerizes as tetra- or hexamer in solution (in vitro). Proteolytically cleaved by proteinase PRTN3 into antibacterial peptide LL-37. Proteolytically cleaved by cathepsin CTSG and neutrophil elastase ELANE. Post-translationally, resistant to proteolytic degradation in solution, and when bound to both zwitterionic (mimicking mammalian membranes) and negatively charged membranes (mimicking bacterial membranes). In terms of processing, after secretion onto the skin surface, the CAMP gene product is processed by a serine protease-dependent mechanism into multiple novel antimicrobial peptides distinct from and shorter than cathelicidin LL-37. These peptides show enhanced antimicrobial action, acquiring the ability to kill skin pathogens such as S.aureus, E.coli and C.albicans. These peptides have lost the ability to stimulate CXCL8/IL8 release from keratinocytes. The peptides act synergistically, killing bacteria at lower concentrations when present together, and maintain activity at increased salt condition.

The protein resides in the secreted. It localises to the vesicle. Antimicrobial protein that is an integral component of the innate immune system. Binds to bacterial lipopolysaccharides (LPS). Acts via neutrophil N-formyl peptide receptors to enhance the release of CXCL2. Postsecretory processing generates multiple cathelicidin antimicrobial peptides with various lengths which act as a topical antimicrobial defense in sweat on skin. The unprocessed precursor form, cathelicidin antimicrobial peptide, inhibits the growth of Gram-negative E.coli and E.aerogenes with efficiencies comparable to that of the mature peptide LL-37 (in vitro). Functionally, antimicrobial peptide that is an integral component of the innate immune system. Binds to bacterial lipopolysaccharides (LPS). Causes membrane permeabilization by forming transmembrane pores (in vitro). Causes lysis of E.coli. Exhibits antimicrobial activity against Gram-negative bacteria such as P.aeruginosa, S.typhimurium, E.aerogenes, E.coli and P.syringae, Gram-positive bacteria such as L.monocytogenes, S.epidermidis, S.pyogenes and S.aureus, as well as vancomycin-resistant enterococci (in vitro). Exhibits antimicrobial activity against methicillin-resistant S.aureus, P.mirabilis, and C.albicans in low-salt media, but not in media containing 100 mM NaCl (in vitro). Forms chiral supramolecular assemblies with quinolone signal (PQS) molecules of P.aeruginosa, which may lead to interference of bacterial quorum signaling and perturbance of bacterial biofilm formation. May form supramolecular fiber-like assemblies on bacterial membranes. Induces cytokine and chemokine producation as well as TNF/TNFA and CSF2/GMCSF production in normal human keratinocytes. Exhibits hemolytic activity against red blood cells. Its function is as follows. Exhibits antimicrobial activity against E.coli and B.megaterium (in vitro). This chain is Cathelicidin antimicrobial peptide, found in Saguinus oedipus (Cotton-top tamarin).